A 424-amino-acid polypeptide reads, in one-letter code: Anaerobic glycerol-3-phosphate dehydrogenase subunit B (424 aa).

Belongs to the anaerobic G-3-P dehydrogenase subunit B family. In terms of assembly, composed of a catalytic GlpA/B dimer and of membrane bound GlpC. It depends on FMN as a cofactor.

It carries out the reaction a quinone + sn-glycerol 3-phosphate = dihydroxyacetone phosphate + a quinol. It functions in the pathway polyol metabolism; glycerol degradation via glycerol kinase pathway; glycerone phosphate from sn-glycerol 3-phosphate (anaerobic route): step 1/1. Functionally, conversion of glycerol 3-phosphate to dihydroxyacetone. Uses fumarate or nitrate as electron acceptor. This chain is Anaerobic glycerol-3-phosphate dehydrogenase subunit B, found in Yersinia enterocolitica serotype O:8 / biotype 1B (strain NCTC 13174 / 8081).